Here is a 445-residue protein sequence, read N- to C-terminus: UPF0761 membrane protein Mlg_0521 (445 aa).

Transmembrane regions (helical) follow at residues 56–76, 112–132, 152–172, 195–215, 225–245, and 259–279; these read LLAL…FPVF, GLTV…MAAI, FMVY…SLGI, LLAG…YAAV, ALLG…GFGW, and ALAA…VVLV.

The protein belongs to the UPF0761 family.

Its subcellular location is the cell inner membrane. The protein is UPF0761 membrane protein Mlg_0521 of Alkalilimnicola ehrlichii (strain ATCC BAA-1101 / DSM 17681 / MLHE-1).